A 1784-amino-acid chain; its full sequence is Protein mel-28 (1784 aa).

The interval 1 to 956 (MDNENSSIFK…QNDDEDMPEV (956 aa)) is required for nuclear envelope and kinetochore localization. Positions 566–778 (GKIEEFCQLA…TSPEDSEHSE (213 aa)) are required for association with mitotic chromosomes. Residues 846 to 1071 (APMTVTIGKH…HNSILKTAKG (226 aa)) form an important for nuclear localization region. Disordered stretches follow at residues 945–994 (KVQN…AKRI) and 1115–1784 (ETMT…RAKQ). Positions 1126–1149 (GKHDEEKDSEKNVVDEMEEVKDQE) are enriched in basic and acidic residues. Composition is skewed to acidic residues over residues 1222–1232 (LEEEGEDEDIW) and 1266–1278 (VNEE…EEVQ). The chromatin binding stretch occupies residues 1239–1601 (FEVQMDEDCE…TTVDPSSSAL (363 aa)). Over residues 1279-1293 (QDAKEPEKTEKRQEE) the composition is skewed to basic and acidic residues. Low complexity predominate over residues 1297-1306 (EVMQPVIPEE). Positions 1321 to 1336 (ELQEEPDIVPTGDEDT) are enriched in acidic residues. Positions 1337–1351 (ADKVQEQAVEEDRPP) are enriched in basic and acidic residues. Over residues 1352-1366 (SRNTRSSSVQKSTSQ) the composition is skewed to polar residues. The segment covering 1367–1382 (VEDRDPKELVEEERPP) has biased composition (basic and acidic residues). Polar residues predominate over residues 1383–1398 (SRNTRSASVQKSSNQE). Positions 1428 to 1444 (KVKDQKPEELIEEDRPP) are enriched in basic and acidic residues. Residues 1445-1459 (SRNTRSASAQKTVAA) show a composition bias toward polar residues. Positions 1533 to 1546 (AAASTSSSRAGSVT) are enriched in low complexity. Acidic residues predominate over residues 1566-1576 (VQEEEEEEAEE). Residues 1581-1606 (SRSTRSASVKNTTVDPSSSALASTKR) are compositionally biased toward polar residues. An important for nuclear localization region spans residues 1601–1784 (LASTKRTTSR…LLRSARRAKQ (184 aa)). The segment at residues 1630–1642 (TPKRGRPAKKDAG) is a DNA-binding region (a.T hook 1). Residues 1630–1784 (TPKRGRPAKK…LLRSARRAKQ (155 aa)) form a required for chromosome segregation, nuclear growth, nucleoplasmic accumulation and cell cycle timing, but not required for nuclear envelope and kinetochore localization region. The segment covering 1716–1735 (AGTSKQSRSVTRSRASSIDV) has biased composition (polar residues). Positions 1746 to 1758 (KRGRGRPPKTVLE) form a DNA-binding region, a.T hook 2.

In terms of tissue distribution, ubiquitously expressed (at protein level).

It localises to the nucleus. The protein resides in the nucleoplasm. The protein localises to the nucleus envelope. It is found in the nucleus inner membrane. Its subcellular location is the nuclear pore complex. It localises to the chromosome. The protein resides in the centromere. The protein localises to the kinetochore. Functionally, nuclear envelope protein which has essential roles in assembly of nuclear pore complexes and in chromatin maintenance during the cell cycle. Appears to be a stable structural component of the nuclear envelope during interphase. In dividing cells, localizes to kinetochores during early stages of mitosis and then to chromatin during late mitosis. Important for several mitotic processes including chromosome condensation, kinetochore assembly, chromosome segregation and cell-cycle timing. In postmitotic cells, plays a role in the early steps of nuclear pore complex assembly by recruiting the nucleoporins npp-10 and npp-5 to chromatin. Also involved in meiotic chromosome segregation. May function downstream of the Ran GTPase signaling pathway. The sequence is that of Protein mel-28 from Caenorhabditis elegans.